A 1470-amino-acid polypeptide reads, in one-letter code: Rap guanine nucleotide exchange factor (1470 aa).

Disordered regions lie at residues 130–227 and 250–313; these read PTEP…SYND and HRRE…GGFM. The span at 173 to 183 shows a compositional bias: pro residues; the sequence is MPPPPVPPRPL. 2 stretches are compositionally biased toward low complexity: residues 184–193 and 215–224; these read RLPQTAAKGP and TTSSSSSNTS. The segment covering 256–266 has biased composition (polar residues); it reads NSVGGQAQNGI. Residues 275–292 show a composition bias toward low complexity; it reads RSTASSTTTEGETASNEG. Position 347-463 (347-463) interacts with a nucleoside 3',5'-cyclic phosphate; the sequence is AFAALPMSIK…IEKDRDGLTG (117 aa). The region spanning 478 to 592 is the N-terminal Ras-GEF domain; it reads CGQVLIKGKP…SLLNIACSVK (115 aa). The 83-residue stretch at 597–679 folds into the PDZ domain; that stretch reads QVILTRRKDD…LTLMLKNNVL (83 aa). Positions 782 to 869 constitute a Ras-associating domain; it reads PEHVLKIYRN…SRYYLKNNSR (88 aa). Residues 894–1124 enclose the Ras-GEF domain; that stretch reads NAQVVAAQLT…FENSNVATMR (231 aa). The span at 1176 to 1189 shows a compositional bias: polar residues; it reads QTAHRGANSSSTAN. 4 disordered regions span residues 1176–1213, 1253–1326, 1347–1370, and 1422–1455; these read QTAH…DQSS, KVKG…NIPP, VIPT…PASS, and ATLP…RMGT. Residues 1198–1211 are compositionally biased toward low complexity; sequence PSSLSSQSAGSADQ. Polar residues-rich tracts occupy residues 1260–1274 and 1282–1308; these read QITS…SLQR and RQAT…YQSD. The segment covering 1309 to 1321 has biased composition (basic and acidic residues); the sequence is NGRRQRSGSEGRF. Residues 1349–1370 show a composition bias toward low complexity; the sequence is PTHPHGHSPTSPRCRSRSPASS.

It belongs to the RAPGEF2 family. As to expression, expressed in hermaphrodite-specific neurons (HSNs), oviduct sheath cells and lateral seam cells.

Its function is as follows. Acts as a guanine nucleotide exchange factor for small G protein GTPases like rap-1 and rap-2. Required in the hypodermis, especially in the seam cells, for proper formation of the cuticle. The chain is Rap guanine nucleotide exchange factor (pxf-1) from Caenorhabditis elegans.